A 148-amino-acid polypeptide reads, in one-letter code: Antitoxin Xre (148 aa).

The protein belongs to the MbcA/ParS/Xre antitoxin family. In terms of assembly, homodimer. Forms a complex with cognate toxin Rse.

Functionally, antitoxin component of a type II toxin-antitoxin (TA) system. Neutralizes the NAD(+) depleting activity of cognate toxin Res. The protein is Antitoxin Xre of Photorhabdus laumondii subsp. laumondii (strain DSM 15139 / CIP 105565 / TT01) (Photorhabdus luminescens subsp. laumondii).